The chain runs to 246 residues: UPF0758 protein SSU98_1084 (246 aa).

Residues Arg-103–Val-225 enclose the MPN domain. 3 residues coordinate Zn(2+): His-174, His-176, and Asp-187. The short motif at His-174–Asp-187 is the JAMM motif element.

It belongs to the UPF0758 family.

This Streptococcus suis (strain 98HAH33) protein is UPF0758 protein SSU98_1084.